A 182-amino-acid polypeptide reads, in one-letter code: tRNA-splicing endonuclease (182 aa).

Residues Tyr-119, His-127, and Lys-158 contribute to the active site.

The protein belongs to the tRNA-intron endonuclease family. Archaeal short subfamily. As to quaternary structure, homotetramer; although the tetramer contains four active sites, only two participate in the cleavage. Therefore, it should be considered as a dimer of dimers.

The enzyme catalyses pretRNA = a 3'-half-tRNA molecule with a 5'-OH end + a 5'-half-tRNA molecule with a 2',3'-cyclic phosphate end + an intron with a 2',3'-cyclic phosphate and a 5'-hydroxyl terminus.. Functionally, endonuclease that removes tRNA introns. Cleaves pre-tRNA at the 5'- and 3'-splice sites to release the intron. The products are an intron and two tRNA half-molecules bearing 2',3' cyclic phosphate and 5'-OH termini. Recognizes a pseudosymmetric substrate in which 2 bulged loops of 3 bases are separated by a stem of 4 bp. The protein is tRNA-splicing endonuclease of Saccharolobus islandicus (strain Y.N.15.51 / Yellowstone #2) (Sulfolobus islandicus).